The chain runs to 243 residues: UPF0246 protein SAK_2020 (243 aa).

It belongs to the UPF0246 family.

This chain is UPF0246 protein SAK_2020, found in Streptococcus agalactiae serotype Ia (strain ATCC 27591 / A909 / CDC SS700).